Reading from the N-terminus, the 128-residue chain is MQRHMLKSKIHRAAVTHCELHYEGSCAIDEDLLEAANIVENERIDIWNVNNGERFSTYAIKGERGSGMISLNGSAARRAQLGDLVIIAAFAMIDEQELKAGWKPDLVFVDEDNKIKGSRDHVPTQNWT.

The Schiff-base intermediate with substrate; via pyruvic acid role is filled by S25. At S25 the chain carries Pyruvic acid (Ser). T57 contacts substrate. The Proton donor role is filled by Y58. 73–75 contributes to the substrate binding site; sequence GSA.

The protein belongs to the PanD family. Heterooctamer of four alpha and four beta subunits. Pyruvate is required as a cofactor. Post-translationally, is synthesized initially as an inactive proenzyme, which is activated by self-cleavage at a specific serine bond to produce a beta-subunit with a hydroxyl group at its C-terminus and an alpha-subunit with a pyruvoyl group at its N-terminus.

The protein localises to the cytoplasm. The catalysed reaction is L-aspartate + H(+) = beta-alanine + CO2. It functions in the pathway cofactor biosynthesis; (R)-pantothenate biosynthesis; beta-alanine from L-aspartate: step 1/1. In terms of biological role, catalyzes the pyruvoyl-dependent decarboxylation of aspartate to produce beta-alanine. The protein is Aspartate 1-decarboxylase of Burkholderia mallei (strain NCTC 10247).